A 301-amino-acid chain; its full sequence is Acetyl-coenzyme A carboxylase carboxyl transferase subunit beta (301 aa).

A CoA carboxyltransferase N-terminal domain is found at 25-294 (LWIKDPSTGE…NSDAPAPQKP (270 aa)).

This sequence belongs to the AccD/PCCB family. In terms of assembly, acetyl-CoA carboxylase is a heterohexamer composed of biotin carboxyl carrier protein (AccB), biotin carboxylase (AccC) and two subunits each of ACCase subunit alpha (AccA) and ACCase subunit beta (AccD).

It is found in the cytoplasm. It carries out the reaction N(6)-carboxybiotinyl-L-lysyl-[protein] + acetyl-CoA = N(6)-biotinyl-L-lysyl-[protein] + malonyl-CoA. It functions in the pathway lipid metabolism; malonyl-CoA biosynthesis; malonyl-CoA from acetyl-CoA: step 1/1. Functionally, component of the acetyl coenzyme A carboxylase (ACC) complex. Biotin carboxylase (BC) catalyzes the carboxylation of biotin on its carrier protein (BCCP) and then the CO(2) group is transferred by the transcarboxylase to acetyl-CoA to form malonyl-CoA. The protein is Acetyl-coenzyme A carboxylase carboxyl transferase subunit beta of Brucella canis (strain ATCC 23365 / NCTC 10854 / RM-666).